A 282-amino-acid polypeptide reads, in one-letter code: Putative hydrolase Bcen_5340 (282 aa).

The Mg(2+) site is built by E124, E126, and D155.

Belongs to the FAH family. It depends on Mg(2+) as a cofactor.

This is Putative hydrolase Bcen_5340 from Burkholderia orbicola (strain AU 1054).